Consider the following 466-residue polypeptide: Ribulose bisphosphate carboxylase large chain (466 aa).

Lysine 5 carries the post-translational modification N6,N6,N6-trimethyllysine. Asparagine 114 and threonine 164 together coordinate substrate. Lysine 166 acts as the Proton acceptor in catalysis. Lysine 168 is a substrate binding site. Mg(2+) is bound by residues lysine 192, aspartate 194, and glutamate 195. Lysine 192 carries the N6-carboxylysine modification. Histidine 285 serves as the catalytic Proton acceptor. Residues arginine 286, histidine 318, and serine 370 each coordinate substrate.

The protein belongs to the RuBisCO large chain family. Type I subfamily. In terms of assembly, heterohexadecamer of 8 large chains and 8 small chains. Mg(2+) is required as a cofactor.

It is found in the plastid. The protein localises to the chloroplast. It carries out the reaction 2 (2R)-3-phosphoglycerate + 2 H(+) = D-ribulose 1,5-bisphosphate + CO2 + H2O. It catalyses the reaction D-ribulose 1,5-bisphosphate + O2 = 2-phosphoglycolate + (2R)-3-phosphoglycerate + 2 H(+). Functionally, ruBisCO catalyzes two reactions: the carboxylation of D-ribulose 1,5-bisphosphate, the primary event in carbon dioxide fixation, as well as the oxidative fragmentation of the pentose substrate in the photorespiration process. Both reactions occur simultaneously and in competition at the same active site. This Drosera regia (King sundew) protein is Ribulose bisphosphate carboxylase large chain.